A 304-amino-acid polypeptide reads, in one-letter code: Tyrosine recombinase XerD (304 aa).

A Core-binding (CB) domain is found at methionine 1 to leucine 92. Positions histidine 113–arginine 298 constitute a Tyr recombinase domain. Active-site residues include arginine 156, lysine 180, histidine 250, arginine 253, and histidine 276. Tyrosine 285 serves as the catalytic O-(3'-phospho-DNA)-tyrosine intermediate.

This sequence belongs to the 'phage' integrase family. XerD subfamily. As to quaternary structure, forms a cyclic heterotetrameric complex composed of two molecules of XerC and two molecules of XerD.

The protein resides in the cytoplasm. In terms of biological role, site-specific tyrosine recombinase, which acts by catalyzing the cutting and rejoining of the recombining DNA molecules. The XerC-XerD complex is essential to convert dimers of the bacterial chromosome into monomers to permit their segregation at cell division. It also contributes to the segregational stability of plasmids. This is Tyrosine recombinase XerD from Corynebacterium glutamicum (strain ATCC 13032 / DSM 20300 / JCM 1318 / BCRC 11384 / CCUG 27702 / LMG 3730 / NBRC 12168 / NCIMB 10025 / NRRL B-2784 / 534).